Here is a 535-residue protein sequence, read N- to C-terminus: MSLSRSEEMHRLTENVYKTIMEQFNPSLRNFIAMGKNYEKALAGVTFAAKGYFDALVKMGELASESQGSKELGDVLFQMAEVHRQIQNQLEEMLKAFHNELLTQLEQKVELDSRYLSAALKKYQTEQRSKGDALDKCQAELKKLRKKSQGSKNPQKYSDKELQYIDAISNKQGELENYVSDGYKTALTEERRRFCFLVEKQCAVAKNSAAYHSKGKELLAQKLPLWQQACADPNKIPDRAAQLMQQMANSNGSILPSALSASKSNLVISDPIPGAKPLPVPPELAPFVGRMSAQENVPVMNGVAGADSEDYNPWADRKAAQPKSLSPPQSQSKLSDSYSNTLPVRKSVTPKNSYATTENKTLPRSSSMAAGLERNGRMRVKAIFSHAAGDNSTLLSFKEGDLITLLVPEARDGWHYGESEKTKMRGWFPFSYTRVLDSDGSDRLHMSLQQGKSSSTGNLLDKDDLALPPPDYGTSSRAFPSQTAGTFKQRPYSVAVPAFSQGLDDYGARSVSRNPFANVHLKPTVTNDRSAPLLS.

The 250-residue stretch at 1–250 folds into the IMD domain; that stretch reads MSLSRSEEMH…AQLMQQMANS (250 aa). Positions 1–251 form a coiled coil; it reads MSLSRSEEMH…QLMQQMANSN (251 aa). Phosphoserine is present on residues Ser262, Ser324, Ser326, and Ser337. The tract at residues 308–370 is disordered; sequence SEDYNPWADR…TLPRSSSMAA (63 aa). The segment covering 321 to 335 has biased composition (low complexity); that stretch reads QPKSLSPPQSQSKLS. Thr341 bears the Phosphothreonine mark. Ser347 is modified (phosphoserine). Polar residues predominate over residues 349-368; it reads TPKNSYATTENKTLPRSSSM. A Phosphothreonine modification is found at Thr361. Phosphoserine occurs at positions 367, 385, 396, and 455. One can recognise an SH3 domain in the interval 375–438; it reads NGRMRVKAIF…PFSYTRVLDS (64 aa). Positions 445–486 are disordered; the sequence is HMSLQQGKSSSTGNLLDKDDLALPPPDYGTSSRAFPSQTAGT. 2 stretches are compositionally biased toward polar residues: residues 447–458 and 473–486; these read SLQQGKSSSTGN and GTSS…TAGT.

As to quaternary structure, homodimer. Interacts with CDC42 and RAC1 that have been activated by GTP binding. Binds TIAM1. Interacts with ATN1, ADGRB1, DIAPH1, EPS8, SHANK1, SHANK2, SHANK3, WASF1 and WASF2. Interacts with ENAH after recruitment of CDC42. Phosphorylated on tyrosine residues by INSR in response to insulin treatment. Ubiquitous.

It localises to the cytoplasm. The protein resides in the membrane. The protein localises to the cell projection. It is found in the filopodium. Its subcellular location is the ruffle. It localises to the cytoskeleton. In terms of biological role, adapter protein that links membrane-bound small G-proteins to cytoplasmic effector proteins. Necessary for CDC42-mediated reorganization of the actin cytoskeleton and for RAC1-mediated membrane ruffling. Involved in the regulation of the actin cytoskeleton by WASF family members and the Arp2/3 complex. Plays a role in neurite growth. Acts syngeristically with ENAH to promote filipodia formation. Plays a role in the reorganization of the actin cytoskeleton in response to bacterial infection. Participates in actin bundling when associated with EPS8, promoting filopodial protrusions. The chain is BAR/IMD domain-containing adapter protein 2 (Baiap2) from Rattus norvegicus (Rat).